The chain runs to 1402 residues: DNA-directed RNA polymerase subunit beta' (1402 aa).

Positions 70, 72, 85, and 88 each coordinate Zn(2+). Mg(2+) contacts are provided by Asp-460, Asp-462, and Asp-464. Positions 812, 886, 893, and 896 each coordinate Zn(2+). Positions 1373–1402 (DRFLNGSASSNEKSRSAGVLEATDEESAGD) are disordered.

This sequence belongs to the RNA polymerase beta' chain family. As to quaternary structure, the RNAP catalytic core consists of 2 alpha, 1 beta, 1 beta' and 1 omega subunit. When a sigma factor is associated with the core the holoenzyme is formed, which can initiate transcription. Mg(2+) is required as a cofactor. Requires Zn(2+) as cofactor.

It catalyses the reaction RNA(n) + a ribonucleoside 5'-triphosphate = RNA(n+1) + diphosphate. DNA-dependent RNA polymerase catalyzes the transcription of DNA into RNA using the four ribonucleoside triphosphates as substrates. This chain is DNA-directed RNA polymerase subunit beta', found in Dichelobacter nodosus (strain VCS1703A).